Consider the following 639-residue polypeptide: tRNA uridine 5-carboxymethylaminomethyl modification enzyme MnmG (639 aa).

Gly-13 to Gly-18 contributes to the FAD binding site. An NAD(+)-binding site is contributed by Gly-274–Phe-288.

It belongs to the MnmG family. In terms of assembly, homodimer. Heterotetramer of two MnmE and two MnmG subunits. Requires FAD as cofactor.

The protein resides in the cytoplasm. NAD-binding protein involved in the addition of a carboxymethylaminomethyl (cmnm) group at the wobble position (U34) of certain tRNAs, forming tRNA-cmnm(5)s(2)U34. The chain is tRNA uridine 5-carboxymethylaminomethyl modification enzyme MnmG from Polynucleobacter asymbioticus (strain DSM 18221 / CIP 109841 / QLW-P1DMWA-1) (Polynucleobacter necessarius subsp. asymbioticus).